We begin with the raw amino-acid sequence, 434 residues long: UPF0597 protein CLK_1462 (434 aa).

It belongs to the UPF0597 family.

This is UPF0597 protein CLK_1462 from Clostridium botulinum (strain Loch Maree / Type A3).